The following is a 556-amino-acid chain: Dihydroxy-acid dehydratase (556 aa).

Residue Asp78 participates in Mg(2+) binding. Cys119 is a binding site for [2Fe-2S] cluster. Residues Asp120 and Lys121 each coordinate Mg(2+). Residue Lys121 is modified to N6-carboxylysine. Cys191 serves as a coordination point for [2Fe-2S] cluster. Mg(2+) is bound at residue Glu442. Residue Ser468 is the Proton acceptor of the active site.

It belongs to the IlvD/Edd family. In terms of assembly, homodimer. It depends on [2Fe-2S] cluster as a cofactor. Mg(2+) serves as cofactor.

It catalyses the reaction (2R)-2,3-dihydroxy-3-methylbutanoate = 3-methyl-2-oxobutanoate + H2O. The catalysed reaction is (2R,3R)-2,3-dihydroxy-3-methylpentanoate = (S)-3-methyl-2-oxopentanoate + H2O. It functions in the pathway amino-acid biosynthesis; L-isoleucine biosynthesis; L-isoleucine from 2-oxobutanoate: step 3/4. The protein operates within amino-acid biosynthesis; L-valine biosynthesis; L-valine from pyruvate: step 3/4. Functionally, functions in the biosynthesis of branched-chain amino acids. Catalyzes the dehydration of (2R,3R)-2,3-dihydroxy-3-methylpentanoate (2,3-dihydroxy-3-methylvalerate) into 2-oxo-3-methylpentanoate (2-oxo-3-methylvalerate) and of (2R)-2,3-dihydroxy-3-methylbutanoate (2,3-dihydroxyisovalerate) into 2-oxo-3-methylbutanoate (2-oxoisovalerate), the penultimate precursor to L-isoleucine and L-valine, respectively. The sequence is that of Dihydroxy-acid dehydratase from Caldanaerobacter subterraneus subsp. tengcongensis (strain DSM 15242 / JCM 11007 / NBRC 100824 / MB4) (Thermoanaerobacter tengcongensis).